Reading from the N-terminus, the 374-residue chain is Chaperone protein DnaJ (374 aa).

The 66-residue stretch at 6-71 (DYYAVLEVTR…QKRAAYDRFG (66 aa)) folds into the J domain. A CR-type zinc finger spans residues 130-209 (GVKKPITVPT…CHGAGTVERE (80 aa)). 8 residues coordinate Zn(2+): cysteine 143, cysteine 146, cysteine 161, cysteine 164, cysteine 183, cysteine 186, cysteine 197, and cysteine 200. 4 CXXCXGXG motif repeats span residues 143–150 (CESCEGTG), 161–168 (CPTCHGAG), 183–190 (CPTCHGAG), and 197–204 (CAACHGAG).

The protein belongs to the DnaJ family. Homodimer. Zn(2+) serves as cofactor.

Its subcellular location is the cytoplasm. Functionally, participates actively in the response to hyperosmotic and heat shock by preventing the aggregation of stress-denatured proteins and by disaggregating proteins, also in an autonomous, DnaK-independent fashion. Unfolded proteins bind initially to DnaJ; upon interaction with the DnaJ-bound protein, DnaK hydrolyzes its bound ATP, resulting in the formation of a stable complex. GrpE releases ADP from DnaK; ATP binding to DnaK triggers the release of the substrate protein, thus completing the reaction cycle. Several rounds of ATP-dependent interactions between DnaJ, DnaK and GrpE are required for fully efficient folding. Also involved, together with DnaK and GrpE, in the DNA replication of plasmids through activation of initiation proteins. In Gluconacetobacter diazotrophicus (strain ATCC 49037 / DSM 5601 / CCUG 37298 / CIP 103539 / LMG 7603 / PAl5), this protein is Chaperone protein DnaJ.